Reading from the N-terminus, the 1265-residue chain is Protein FAM193A (1265 aa).

Residues 107–142 (SEDTYSTLLQRYQRSEEELRRVAEEWLECQKRIDAY) adopt a coiled-coil conformation. A disordered region spans residues 247–272 (APDYLAERSPPSVSSASSGSGSSSPI). The span at 255–271 (SPPSVSSASSGSGSSSP) shows a compositional bias: low complexity. At Ser293 the chain carries Phosphoserine. 7 disordered regions span residues 331 to 407 (NGGG…EQAP), 553 to 586 (GSEI…SKEK), 626 to 674 (VQSS…APLP), 750 to 785 (ENGV…NQKE), 822 to 841 (LTKR…ERES), 859 to 881 (ETKP…KLEE), and 893 to 1163 (EHLH…DRVN). Positions 355–365 (EADDEEADGES) are enriched in acidic residues. Phosphoserine is present on Ser383. Ser642 is subject to Phosphoserine. Over residues 757–769 (QQDDGDESADEDS) the composition is skewed to acidic residues. The segment covering 772–781 (EHSSSTSTST) has biased composition (low complexity). Basic residues predominate over residues 868 to 877 (AAKRARHKQR). A coiled-coil region spans residues 873 to 932 (RHKQRKLEEKARLEAEARAREHLHLQEEQRRREEEEDEEEEEDRFKEEFQRLQELQKLRA). Basic and acidic residues-rich tracts occupy residues 893-905 (EHLH…RRRE) and 915-929 (DRFK…ELQK). The span at 931–940 (RAVKKKKKER) shows a compositional bias: basic residues. Residues 953–973 (RNFQAATESVPNSGNIHNGSL) show a composition bias toward polar residues. A coiled-coil region spans residues 1093–1118 (TEQKREERKVNSNNNNKKQLNHIKDE). Phosphoserine occurs at positions 1129 and 1144. Residues 1149–1159 (GKNKKNKKKKG) are compositionally biased toward basic residues.

The protein belongs to the FAM193 family.

The sequence is that of Protein FAM193A (FAM193A) from Homo sapiens (Human).